We begin with the raw amino-acid sequence, 432 residues long: Serine--tRNA ligase (432 aa).

230 to 232 (TAE) serves as a coordination point for L-serine. Position 261 to 263 (261 to 263 (RSE)) interacts with ATP. An L-serine-binding site is contributed by E284. 348–351 (EVSS) lines the ATP pocket. S383 is an L-serine binding site.

It belongs to the class-II aminoacyl-tRNA synthetase family. Type-1 seryl-tRNA synthetase subfamily. As to quaternary structure, homodimer. The tRNA molecule binds across the dimer.

The protein localises to the cytoplasm. It catalyses the reaction tRNA(Ser) + L-serine + ATP = L-seryl-tRNA(Ser) + AMP + diphosphate + H(+). The catalysed reaction is tRNA(Sec) + L-serine + ATP = L-seryl-tRNA(Sec) + AMP + diphosphate + H(+). Its pathway is aminoacyl-tRNA biosynthesis; selenocysteinyl-tRNA(Sec) biosynthesis; L-seryl-tRNA(Sec) from L-serine and tRNA(Sec): step 1/1. Its function is as follows. Catalyzes the attachment of serine to tRNA(Ser). Is also able to aminoacylate tRNA(Sec) with serine, to form the misacylated tRNA L-seryl-tRNA(Sec), which will be further converted into selenocysteinyl-tRNA(Sec). This Limosilactobacillus fermentum (strain NBRC 3956 / LMG 18251) (Lactobacillus fermentum) protein is Serine--tRNA ligase.